The chain runs to 128 residues: Small ribosomal subunit protein uS9 (128 aa).

Belongs to the universal ribosomal protein uS9 family.

The chain is Small ribosomal subunit protein uS9 from Cytophaga hutchinsonii (strain ATCC 33406 / DSM 1761 / CIP 103989 / NBRC 15051 / NCIMB 9469 / D465).